A 53-amino-acid chain; its full sequence is Zinc metalloproteinase-disintegrin-like alborhagin (53 aa).

This sequence belongs to the venom metalloproteinase (M12B) family. P-III subfamily. P-IIIb sub-subfamily. In terms of assembly, monomer. The cofactor is Zn(2+). Contains numerous disulfide bonds. Post-translationally, glycosylated. Expressed by the venom gland.

The protein resides in the secreted. Its activity is regulated as follows. Alborhagin-induced platelet aggregation, but not shape change, is inhibited by EDTA, suggesting that the platelet activation (shape change) is independent of divalent cation or metalloproteinase activity. Induces platelet activation and glycoprotein VI (GP6)-dependent platelet aggregation. Induces ectodomain cleavage of GP6 by activating endogenous platelet metalloproteinases (probably ADAM10). Has fibrinogenolytic activity against the alpha chain of fibrinogen (FGA). Recognizes distinct binding sites as convulxin, since alborhagin has minimal effect on convulxin binding to GPVI-expressing cells. In terms of biological role, disintegrin alborhagin-C: 42 kDa fragment of alborhagin autoproteolysed that does not show platelet activation. The polypeptide is Zinc metalloproteinase-disintegrin-like alborhagin (Trimeresurus albolabris (White-lipped pit viper)).